Reading from the N-terminus, the 734-residue chain is 1,4-alpha-glucan branching enzyme GlgB (734 aa).

The active-site Nucleophile is Asp414. Glu467 serves as the catalytic Proton donor.

Belongs to the glycosyl hydrolase 13 family. GlgB subfamily. In terms of assembly, monomer.

The catalysed reaction is Transfers a segment of a (1-&gt;4)-alpha-D-glucan chain to a primary hydroxy group in a similar glucan chain.. The protein operates within glycan biosynthesis; glycogen biosynthesis. Its function is as follows. Catalyzes the formation of the alpha-1,6-glucosidic linkages in glycogen by scission of a 1,4-alpha-linked oligosaccharide from growing alpha-1,4-glucan chains and the subsequent attachment of the oligosaccharide to the alpha-1,6 position. The chain is 1,4-alpha-glucan branching enzyme GlgB from Myxococcus xanthus (strain DK1622).